Consider the following 476-residue polypeptide: Fatty acid hydroperoxide lyase, chloroplastic (476 aa).

The helical transmembrane segment at 280–300 (LLFILGFNAFGGFSIFLPTLL) threads the bilayer. C438 provides a ligand contact to heme.

Belongs to the cytochrome P450 family. Heme serves as cofactor. Highly expressed in developing flowers and in young leaves. Detected in stems and immature green fruits, but not in mature green and red fruits.

It is found in the plastid. It localises to the chloroplast outer membrane. Reversibly inhibited by nordihydroguaiaretic acid (NDGA) and irreversibly by salicylic acid. Its function is as follows. Cytochrome P450 of the CYP74B subfamily involved in the biosynthesis of traumatin and C6 aldehydes. Metabolizes 13- but not 9-hydroperoxides of linoleic and linolenic acids. Can use 15S-hydroperoxy-11(Z),13(E),17(Z)-eicosatrienoic acid (15-HPET) and 13S-hydroperoxy-9(Z),11(E),15(Z)-octadecatrienoic acid (13-HPOT) as substrates, but only 5% activity with 13S-hydroperoxy-9(Z),11(E)-octadecadienoic acid (13-HPOD). Produces n-hexanal and 12-oxo-9(Z)-dodecanoic acid from 13-HPOD. The chain is Fatty acid hydroperoxide lyase, chloroplastic from Solanum lycopersicum (Tomato).